The following is a 332-amino-acid chain: Ketol-acid reductoisomerase (NADP(+)) (332 aa).

One can recognise a KARI N-terminal Rossmann domain in the interval 1-182; the sequence is MAVIYYDKDC…GSNRAGILET (182 aa). Residues 25 to 28 and 83 to 86 contribute to the NADP(+) site; these read YGAQ and DTSQ. His108 is a catalytic residue. Gly134 is a binding site for NADP(+). A KARI C-terminal knotted domain is found at 183–328; it reads TFAEETETDL…AELRSMMSWL (146 aa). The Mg(2+) site is built by Asp191, Glu195, Glu227, and Glu231. Ser252 provides a ligand contact to substrate.

It belongs to the ketol-acid reductoisomerase family. Requires Mg(2+) as cofactor.

The catalysed reaction is (2R)-2,3-dihydroxy-3-methylbutanoate + NADP(+) = (2S)-2-acetolactate + NADPH + H(+). It catalyses the reaction (2R,3R)-2,3-dihydroxy-3-methylpentanoate + NADP(+) = (S)-2-ethyl-2-hydroxy-3-oxobutanoate + NADPH + H(+). Its pathway is amino-acid biosynthesis; L-isoleucine biosynthesis; L-isoleucine from 2-oxobutanoate: step 2/4. It functions in the pathway amino-acid biosynthesis; L-valine biosynthesis; L-valine from pyruvate: step 2/4. In terms of biological role, involved in the biosynthesis of branched-chain amino acids (BCAA). Catalyzes an alkyl-migration followed by a ketol-acid reduction of (S)-2-acetolactate (S2AL) to yield (R)-2,3-dihydroxy-isovalerate. In the isomerase reaction, S2AL is rearranged via a Mg-dependent methyl migration to produce 3-hydroxy-3-methyl-2-ketobutyrate (HMKB). In the reductase reaction, this 2-ketoacid undergoes a metal-dependent reduction by NADPH to yield (R)-2,3-dihydroxy-isovalerate. The protein is Ketol-acid reductoisomerase (NADP(+)) of Dehalococcoides mccartyi (strain ATCC BAA-2100 / JCM 16839 / KCTC 5957 / BAV1).